A 116-amino-acid chain; its full sequence is MSATAATAPPAAPAGEGGPPAPPPNLTSNRRLQQTQAQVDEVVDIMRVNVDKVLERDQKLSELDDRADALQAGASQFETSAAKLKRKYWWKNLKMMIILGVICAIILIIIIVYFST.

The disordered stretch occupies residues 1-33 (MSATAATAPPAAPAGEGGPPAPPPNLTSNRRLQ). Residue serine 2 is modified to N-acetylserine. Residues 2-94 (SATAATAPPA…KRKYWWKNLK (93 aa)) are Cytoplasmic-facing. The region spanning 31–91 (RLQQTQAQVD…AKLKRKYWWK (61 aa)) is the v-SNARE coiled-coil homology domain. The required for interaction with SEPT8 stretch occupies residues 92–116 (NLKMMIILGVICAIILIIIIVYFST). The helical; Anchor for type IV membrane protein transmembrane segment at 95–114 (MMIILGVICAIILIIIIVYF) threads the bilayer. The Vesicular portion of the chain corresponds to 115-116 (ST).

It belongs to the synaptobrevin family. Part of the SNARE core complex containing SNAP25, VAMP2 and STX1A; this complex constitutes the basic catalytic machinery of the complex neurotransmitter release apparatus. Recruited to the SNARE complex following binding of the SNARE complex component STX1A to STXBP1. This complex binds to CPLX1. Interacts with POPDC1 and STX4. Interacts with VAPA and VAPB. Interacts with WDFY2, PRKCZ and PRKCI. Forms a complex with WDFY2 and PRKCZ. Interacts (via N-terminus) with KCNB1 (via N-terminus and C-terminus); stimulates the channel inactivation rate of KCNB1. Interacts with SEPT8; the interaction inhibits interaction of VAMP2 with SYP. Interacts with SYP; the interaction is inhibited by interaction with SEPT8. Interacts with PICALM. Interacts with alpha-synuclein/SNCA. Interacts with STX3. Phosphorylated by PRKCZ in vitro and this phosphorylation is increased in the presence of WDFY2. Post-translationally, (Microbial infection) Targeted and hydrolyzed by C.botulinum neurotoxin type B (BoNT/B, botB) which hydrolyzes the 76-Gln-|-Phe-77 bond and probably inhibits neurotransmitter release. In terms of processing, (Microbial infection) Targeted and hydrolyzed by C.botulinum neurotoxin type D (BoNT/D, botD) which probably hydrolyzes the 59-Lys-|-Leu-60 bond and inhibits neurotransmitter release. Note that humans are not known to be infected by C.botulinum type D. (Microbial infection) Targeted and hydrolyzed by C.botulinum neurotoxin type F (BoNT/F, botF) which hydrolyzes the 58-Gln-|-Lys-59 bond and probably inhibits neurotransmitter release. Post-translationally, (Microbial infection) Targeted and hydrolyzed by C.tetani tetanus toxin (tetX) which hydrolyzes the 76-Gln-|-Phe-77 bond and probably inhibits neurotransmitter release. As to expression, nervous system and skeletal muscle.

Its subcellular location is the cytoplasmic vesicle. The protein localises to the secretory vesicle. It localises to the synaptic vesicle membrane. The protein resides in the cell membrane. Its function is as follows. Involved in the targeting and/or fusion of transport vesicles to their target membrane. Major SNARE protein of synaptic vesicles which mediates fusion of synaptic vesicles to release neurotransmitters. Essential for fast vesicular exocytosis and activity-dependent neurotransmitter release as well as fast endocytosis that mediates rapid reuse of synaptic vesicles. Modulates the gating characteristics of the delayed rectifier voltage-dependent potassium channel KCNB1. The polypeptide is Vesicle-associated membrane protein 2 (Homo sapiens (Human)).